The chain runs to 216 residues: Large ribosomal subunit protein uL4 (216 aa).

Positions 51–78 (KGRSEVHGSNTKPYKQKGTGRARRGDKK) are disordered. Residues 64–76 (YKQKGTGRARRGD) show a composition bias toward basic residues.

The protein belongs to the universal ribosomal protein uL4 family. In terms of assembly, part of the 50S ribosomal subunit.

One of the primary rRNA binding proteins, this protein initially binds near the 5'-end of the 23S rRNA. It is important during the early stages of 50S assembly. It makes multiple contacts with different domains of the 23S rRNA in the assembled 50S subunit and ribosome. Functionally, forms part of the polypeptide exit tunnel. The protein is Large ribosomal subunit protein uL4 of Treponema pallidum (strain Nichols).